The following is a 360-amino-acid chain: Phosphate acyltransferase (360 aa).

It belongs to the PlsX family. As to quaternary structure, homodimer. Probably interacts with PlsY.

It is found in the cytoplasm. It catalyses the reaction a fatty acyl-[ACP] + phosphate = an acyl phosphate + holo-[ACP]. It participates in lipid metabolism; phospholipid metabolism. Its function is as follows. Catalyzes the reversible formation of acyl-phosphate (acyl-PO(4)) from acyl-[acyl-carrier-protein] (acyl-ACP). This enzyme utilizes acyl-ACP as fatty acyl donor, but not acyl-CoA. The polypeptide is Phosphate acyltransferase (Caulobacter vibrioides (strain ATCC 19089 / CIP 103742 / CB 15) (Caulobacter crescentus)).